The primary structure comprises 152 residues: Transmembrane protein 35B (152 aa).

The N-terminal stretch at 1 to 21 (MLVSLGALRVLLGIFFTLTGA) is a signal peptide. 3 helical membrane passes run 62–82 (AAVGWLELLAGLLLVVGPPVL), 85–105 (ISNVLLILLMMGAVFTLVVLE), and 111–131 (YIPAVVCLGLLLLLDSCQFLV).

Belongs to the DoxX family.

It localises to the membrane. In Rattus norvegicus (Rat), this protein is Transmembrane protein 35B.